A 299-amino-acid chain; its full sequence is MAQNLKDLAGRLPAGPRGMGTALKLLLGAGAVAYGVRESVFTVEGGHRAIFFNRIGGVQQDTILAEGLHFRIPWFQYPIIYDIRARPRKISSPTGSKDLQMVNISLRVLSRPNAQELPSMYQRLGLDYEERVLPSIVNEVLKSVVAKFNASQLITQRAQVSLLIRRELTERAKDFSLILDDVAITELSFSREYTAAVEAKQVAQQEAQRAQFLVEKAKQEQRQKIVQAEGEAEAAKMLGEALSKNPGYIKLRKIRAAQNISKTIATSQNRIYPTADNLVLNLQDESFTRGSDSLIKGKK.

Ala-2 carries the post-translational modification N-acetylalanine. The segment at 19-49 is necessary for transcriptional repression; the sequence is MGTALKLLLGAGAVAYGVRESVFTVEGGHRA. At Tyr-128 the chain carries Phosphotyrosine. Lys-147 is subject to N6-acetyllysine. Residues 150–174 are necessary for transcriptional repression; sequence ASQLITQRAQVSLLIRRELTERAKD. Residue Ser-151 is modified to Phosphoserine. Residues 190 to 238 adopt a coiled-coil conformation; that stretch reads SREYTAAVEAKQVAQQEAQRAQFLVEKAKQEQRQKIVQAEGEAEAAKML. Residues Lys-200, Lys-236, Lys-250, and Lys-262 each carry the N6-acetyllysine modification.

Belongs to the prohibitin family. In terms of assembly, the mitochondrial prohibitin complex consists of two subunits (PHB1 and PHB2), assembled into a membrane-associated ring-shaped supercomplex of approximately 1 mDa. Interacts with ESR1, HDAC1 and HDAC5. Interacts with ZNF703. Interacts with STOML2. Interacts with ARFGEF3. Interacts with SPHK2. Interacts with COX4I1; the interaction associates PHB2 with COX. Interacts with MAP1LC3B (membrane-bound form LC3-II); the interaction is direct and upon mitochondrial depolarization and proteasome-dependent outer membrane rupture. Interacts with IGFBP6 (via C-terminal domain). Interacts with CLPB. Interacts with CD86 (via cytoplasmic domain); the interactions increases after priming with CD40. Interacts with AFG3L2. Interacts with DNAJC19. Interacts with AKT2; this interaction may be important for myogenic differentiation. Phosphorylated. Tyrosine phosphorylation is indirectly stimulated by IGFBP6.

The protein localises to the mitochondrion inner membrane. It localises to the cytoplasm. The protein resides in the nucleus. Its subcellular location is the cell membrane. Functionally, protein with pleiotropic attributes mediated in a cell-compartment- and tissue-specific manner, which include the plasma membrane-associated cell signaling functions, mitochondrial chaperone, and transcriptional co-regulator of transcription factors and sex steroid hormones in the nucleus. Its function is as follows. In the mitochondria, together with PHB, forms large ring complexes (prohibitin complexes) in the inner mitochondrial membrane (IMM) and functions as a chaperone protein that stabilizes mitochondrial respiratory enzymes and maintains mitochondrial integrity in the IMM, which is required for mitochondrial morphogenesis, neuronal survival, and normal lifespan. The prohibitin complex, with DNAJC19, regulates cardiolipin remodeling and the protein turnover of OMA1 in a cardiolipin-binding manner. Also regulates cytochrome-c oxidase assembly (COX) and mitochondrial respiration. Binding to sphingoid 1-phosphate (SPP) modulates its regulator activity. Has a key role of mitophagy receptor involved in targeting mitochondria for autophagic degradation. Involved in mitochondrial-mediated antiviral innate immunity, activates RIG-I-mediated signal transduction and production of IFNB1 and pro-inflammatory cytokine IL6. In the nucleus, serves as transcriptional co-regulator. Acts as a mediator of transcriptional repression by nuclear hormone receptors via recruitment of histone deacetylases. Functions as an estrogen receptor (ER)-selective coregulator that potentiates the inhibitory activities of antiestrogens and represses the activity of estrogens. Competes with NCOA1 for modulation of ER transcriptional activity. In terms of biological role, in the plasma membrane, is involved in IGFBP6-induced cell migration. Cooperates with CD86 to mediate CD86-signaling in B lymphocytes that regulates the level of IgG1 produced through the activation of distal signaling intermediates. Upon CD40 engagement, required to activate NF-kappa-B signaling pathway via phospholipase C and protein kinase C activation. In Pongo abelii (Sumatran orangutan), this protein is Prohibitin-2 (PHB2).